The following is a 264-amino-acid chain: MPVVSLAQMMESGVHFGHQTRRWNPKMSPYIYTSRNGVHIIDLVQTAQLMDNAYNYMRSHAEQGKKFLFVGTKRQAAGIIAQEASRCGSHYINQRWLGGMLTNWATIKTRVDRLKDLERREETGALDLLPKKEASMLRREMTKLQKYLGGIKTMRKVPDIVVIVDQRREYNAVQECQKLNIPIVSMLDTNCDPDVVDIPIPANDDAIRSIKLIVGKLADAIYEGRHGQLDAEDDYEDYDGSEYDDDYEETEYTDAVIPDEETEE.

A disordered region spans residues 228 to 264; it reads QLDAEDDYEDYDGSEYDDDYEETEYTDAVIPDEETEE. Over residues 230-264 the composition is skewed to acidic residues; sequence DAEDDYEDYDGSEYDDDYEETEYTDAVIPDEETEE.

Belongs to the universal ribosomal protein uS2 family.

The polypeptide is Small ribosomal subunit protein uS2 (Nostoc punctiforme (strain ATCC 29133 / PCC 73102)).